The sequence spans 266 residues: Gasdermin bGSDM (266 aa).

4 beta stranded membrane-spanning segments follow: residues Phe-65–Leu-81, Glu-93–Glu-113, Gln-162–Val-181, and Ala-187–Thr-203. Positions Gly-248 to Leu-266 are C-terminal region.

Belongs to the bacterial gasdermin family. As to quaternary structure, monomer. In terms of assembly, forms large, homooligomeric ring-shaped pores when inserted in membranes.

It localises to the cytoplasm. Its subcellular location is the cell membrane. The full-length protein before cleavage is inactive: intramolecular interactions between the N-terminal domain and the C-terminal region mediate autoinhibition. The pyroptosis-like-inducing activity is carried by the released N-terminal domain (Gasdermin bGSDM, N-terminus). In terms of biological role, precursor of a pore-forming protein involved in defense against bacteriophages. Cleavage of this precursor by its dedicated protease releases the active moiety (gasdermin bGSDM, N-terminus) which inserts into membranes, forming pores and triggering cell death. Expression of bGSDM and the neighboring protease gene (Ga0307981_100051430) is highly toxic in E.coli. Functionally, pore-forming protein that causes membrane permeabilization via a pyroptosis-like activity. This is the active form which makes ring-like pores with an interior pore diameter of 130-190 Angstroms, when integrated in liposomes. In Unknown prokaryotic organism, this protein is Gasdermin bGSDM.